A 302-amino-acid chain; its full sequence is Recombination-associated protein RdgC (302 aa).

This sequence belongs to the RdgC family.

It is found in the cytoplasm. Its subcellular location is the nucleoid. Its function is as follows. May be involved in recombination. This chain is Recombination-associated protein RdgC, found in Actinobacillus pleuropneumoniae serotype 3 (strain JL03).